The following is an 81-amino-acid chain: Control protein C.BamHI (81 aa).

Positions V13 to L68 constitute an HTH cro/C1-type domain. Positions Q25 to R44 form a DNA-binding region, H-T-H motif.

Functionally, may help modulate methylase (M) and restriction enzyme (R) expression as cells undergo physiological changes such as sporulation or transformation. The protein is Control protein C.BamHI of Bacillus amyloliquefaciens (Bacillus velezensis).